The chain runs to 787 residues: Phenylalanine--tRNA ligase beta subunit (787 aa).

Positions 39–149 (APAFAGVVIA…EDAPVGTNIR (111 aa)) constitute a tRNA-binding domain. The 76-residue stretch at 400 to 475 (PEAKQVGLRL…RVYGYENIPD (76 aa)) folds into the B5 domain. Mg(2+) contacts are provided by Asp453, Asp459, Glu462, and Glu463. Residues 694-786 (SKFQPVRRDL…AATAAGARLR (93 aa)) form the FDX-ACB domain.

This sequence belongs to the phenylalanyl-tRNA synthetase beta subunit family. Type 1 subfamily. As to quaternary structure, tetramer of two alpha and two beta subunits. Requires Mg(2+) as cofactor.

It is found in the cytoplasm. The catalysed reaction is tRNA(Phe) + L-phenylalanine + ATP = L-phenylalanyl-tRNA(Phe) + AMP + diphosphate + H(+). This is Phenylalanine--tRNA ligase beta subunit (pheT) from Neisseria meningitidis serogroup B (strain ATCC BAA-335 / MC58).